The primary structure comprises 63 residues: Cecropin-2 (63 aa).

The signal sequence occupies residues 1–21 (MNFNKVLVLLAVIFAVFAGQT). Positions 22–23 (EA) are excised as a propeptide. The residue at position 62 (Lys62) is a Lysine amide.

The protein belongs to the cecropin family.

Its subcellular location is the secreted. In terms of biological role, cecropins have lytic and antibacterial activity against several Gram-positive and Gram-negative bacteria. The polypeptide is Cecropin-2 (CEC2) (Ceratitis capitata (Mediterranean fruit fly)).